A 1128-amino-acid chain; its full sequence is MTISDKIRIYELSRDLNLENKDILDAAQKLSISVKSHSSSISVEEAKKIKNLINKKNSDKQILSINKPSNKKDNYKQNKEDKSPVISSVKGKPLKDNSNKKQLLNKPLNKPESLKVIPNQLKNPNKPNIYNSSQSQANLTNQNTKSKPSEHFNKDKKTFRNNTIPPIKTPAKPPIQLIAKPKNINNNLKSNESSKNIPNSGDKRELSLKPDQNRNKPKPKNSNNRRNTPELVGAPIRRDDPNKQNNKQNITFKQTVSNRPGTPNRPGTPNRPGMPNRPGLRNKPTDQGRPGSFNRQANPNRAGAPNRPGMPNRPGLRNKPTDQGRPGSFNRQANPNRAGAPNRPGMPNRPGSRFNSQKSTGIRKPVSPNELLQLQKTNKSEKDTLAKTNNQKQNIESPKQKAKAPASRPNAVPSSKKPPHRPFSNSSKKPGRKDWDDSAKLEALRNKNPQKQRQKVHIIGENDDSLTSETSGYSGEKISILSASLARPKKEKSEESKSHKSTKQFKKKKKETTRQRQKRRAMELKAAKEAKQVRPEMIIVPEDNLTVQELADKLSLESSEIIKSLFFKGITATVTQSLDLATIETVAEEFGVPVLQDDIQEAAEKTVDMIESDDFDSLIKRPPVITVMGHVDHGKTSLLDSIRESRVASGEAGGITQHIGAYQVEFKHESKKKKLTFLDTPGHEAFTAMRARGTKVTDVAVLVVAADDGCRPQTLEAISHARAAKVPIVVAINKIDKEGASPERVKQELSEKDLIAEDWGGDTVMVPVSAIKKQNIDKLLEMILLVSEVEDLQANPDRSAKGTVIEAHLDKAKGPVATLLVQNGTLKSGDVLAAGSVLGKIRAMVDEHGNRIKEAGPSFPVEALGFSEVPTAGDEFEVYPDEKTARAIVGDRATDARATKLAQQMASRRVTLSSLSTQANDGELKELNLILKADVQGSVEAILGSLEQLPKNEVQVRVLLSAPGEITETDIDLAAASGSVIIGFNTSLASGAKRAADANDVDIREYEVIYKLLEDIQLAMEGLLEPDLVEESLGKAEVRATFAVGKGAIAGCYIQTGKLQRNCSLRVIRSDKVIFEGNLDSLKRSKDDVKEVNTGFECGVGCDKFSSWTEGDIIEAFKFVTKKRTLTQ.

The tract at residues asparagine 57 to arginine 519 is disordered. The span at asparagine 70–serine 83 shows a compositional bias: basic and acidic residues. Residues lysine 100 to lysine 110 are compositionally biased toward low complexity. Residues glutamine 120–serine 146 show a composition bias toward polar residues. A compositionally biased stretch (basic and acidic residues) spans lysine 147–threonine 158. The span at lysine 182–asparagine 196 shows a compositional bias: low complexity. A compositionally biased stretch (basic and acidic residues) spans glycine 201–arginine 214. Polar residues-rich tracts occupy residues lysine 243 to glycine 267 and alanine 386 to serine 397. The segment covering arginine 432–arginine 445 has biased composition (basic and acidic residues). Over residues histidine 499–arginine 519 the composition is skewed to basic residues. Residues lysine 620–leucine 792 enclose the tr-type G domain. Residues glycine 629–threonine 636 form a G1 region. A GTP-binding site is contributed by glycine 629–threonine 636. The G2 stretch occupies residues glycine 654–histidine 658. The interval aspartate 679–glycine 682 is G3. GTP-binding positions include aspartate 679–histidine 683 and asparagine 733–aspartate 736. Residues asparagine 733 to aspartate 736 are G4. The tract at residues serine 769–isoleucine 771 is G5.

The protein belongs to the TRAFAC class translation factor GTPase superfamily. Classic translation factor GTPase family. IF-2 subfamily.

The protein resides in the cytoplasm. In terms of biological role, one of the essential components for the initiation of protein synthesis. Protects formylmethionyl-tRNA from spontaneous hydrolysis and promotes its binding to the 30S ribosomal subunits. Also involved in the hydrolysis of GTP during the formation of the 70S ribosomal complex. The sequence is that of Translation initiation factor IF-2 from Prochlorococcus marinus (strain MIT 9312).